The primary structure comprises 279 residues: Putative pyruvate, phosphate dikinase regulatory protein (279 aa).

156–163 (GISRVGKT) provides a ligand contact to ADP.

It belongs to the pyruvate, phosphate/water dikinase regulatory protein family. PDRP subfamily.

The enzyme catalyses N(tele)-phospho-L-histidyl/L-threonyl-[pyruvate, phosphate dikinase] + ADP = N(tele)-phospho-L-histidyl/O-phospho-L-threonyl-[pyruvate, phosphate dikinase] + AMP + H(+). It carries out the reaction N(tele)-phospho-L-histidyl/O-phospho-L-threonyl-[pyruvate, phosphate dikinase] + phosphate + H(+) = N(tele)-phospho-L-histidyl/L-threonyl-[pyruvate, phosphate dikinase] + diphosphate. Bifunctional serine/threonine kinase and phosphorylase involved in the regulation of the pyruvate, phosphate dikinase (PPDK) by catalyzing its phosphorylation/dephosphorylation. The sequence is that of Putative pyruvate, phosphate dikinase regulatory protein from Chloroflexus aurantiacus (strain ATCC 29366 / DSM 635 / J-10-fl).